Reading from the N-terminus, the 184-residue chain is Peptidyl-tRNA hydrolase (184 aa).

Position 14 (tyrosine 14) interacts with tRNA. Histidine 19 acts as the Proton acceptor in catalysis. TRNA is bound by residues phenylalanine 60 and asparagine 62.

The protein belongs to the PTH family. As to quaternary structure, monomer.

Its subcellular location is the cytoplasm. The catalysed reaction is an N-acyl-L-alpha-aminoacyl-tRNA + H2O = an N-acyl-L-amino acid + a tRNA + H(+). Hydrolyzes ribosome-free peptidyl-tRNAs (with 1 or more amino acids incorporated), which drop off the ribosome during protein synthesis, or as a result of ribosome stalling. Functionally, catalyzes the release of premature peptidyl moieties from peptidyl-tRNA molecules trapped in stalled 50S ribosomal subunits, and thus maintains levels of free tRNAs and 50S ribosomes. This is Peptidyl-tRNA hydrolase from Mesomycoplasma hyopneumoniae (strain 232) (Mycoplasma hyopneumoniae).